Here is a 78-residue protein sequence, read N- to C-terminus: Omega-conotoxin-like VnMKLT1-0111 (78 aa).

The signal sequence occupies residues 1–22 (MKLTCMMIVAVLFLTAWTFVTA). Residues 23-48 (DSRNGLEYLFPKAHYEMNPEASKLNK) constitute a propeptide that is removed on maturation. Intrachain disulfides connect cysteine 52/cysteine 69, cysteine 59/cysteine 73, and cysteine 68/cysteine 77.

The protein belongs to the conotoxin O1 superfamily. In terms of tissue distribution, expressed by the venom duct.

Its subcellular location is the secreted. Omega-conotoxins act at presynaptic membranes, they bind and block voltage-gated calcium channels (Cav). The protein is Omega-conotoxin-like VnMKLT1-0111 of Conus ventricosus (Mediterranean cone).